Here is a 350-residue protein sequence, read N- to C-terminus: MDMTFFRAALLGACVLLSGCDSATTPASPASTATVLDGKTMGTFWRVSVIGVDEAKAEALRAKVQAQLDADDRLLSTWKNDSALMRFNHAADTRPWPVSEAMVDIVTLSLRIGAKTHGAMDITVGPLVNLWGFGPDKQPVTTPDAQAIAAAKARTGLQHLQVINQSGRQFLQKDIPDLFVDLSTVGEGYAADHLARLMEQEGISRYLVSVGGALVSRGMNGEGKPWRVAIQKPTDRENAVQAIVDINGHGISTSGSYRNYYELDGKRISHVIDPQTGQPITHKLVSVTVIAPTALEADGWDTGLMVLGPEKAQQVVREQGLAVYMIVKEGEGFKTWMSPQFRTFLVGEKN.

A signal peptide spans Met-1–Gly-19. Residue Cys-20 is the site of N-palmitoyl cysteine attachment. Cys-20 carries S-diacylglycerol cysteine lipidation. Residues Met-41, Trp-78, Ala-119 to Asp-121, and Asp-181 each bind FAD. Thr-184 contributes to the Mg(2+) binding site. FAD contacts are provided by Glu-187 and Ile-272. Positions 298, 301, and 302 each coordinate Mg(2+).

This sequence belongs to the ApbE family. Mg(2+) serves as cofactor.

It is found in the cell inner membrane. The catalysed reaction is L-threonyl-[protein] + FAD = FMN-L-threonyl-[protein] + AMP + H(+). Functionally, flavin transferase that catalyzes the transfer of the FMN moiety of FAD and its covalent binding to the hydroxyl group of a threonine residue in a target flavoprotein such as NqrB and NqrC, two subunits of the NQR complex. The chain is FAD:protein FMN transferase from Klebsiella pneumoniae (strain 342).